Reading from the N-terminus, the 229-residue chain is 5'-methylthioadenosine/S-adenosylhomocysteine nucleosidase (229 aa).

The active-site Proton acceptor is E12. Substrate is bound by residues G78, I152, and 173-174 (ME). The active-site Proton donor is the D197.

Belongs to the PNP/UDP phosphorylase family. MtnN subfamily.

It carries out the reaction S-adenosyl-L-homocysteine + H2O = S-(5-deoxy-D-ribos-5-yl)-L-homocysteine + adenine. It catalyses the reaction S-methyl-5'-thioadenosine + H2O = 5-(methylsulfanyl)-D-ribose + adenine. The enzyme catalyses 5'-deoxyadenosine + H2O = 5-deoxy-D-ribose + adenine. The protein operates within amino-acid biosynthesis; L-methionine biosynthesis via salvage pathway; S-methyl-5-thio-alpha-D-ribose 1-phosphate from S-methyl-5'-thioadenosine (hydrolase route): step 1/2. Functionally, catalyzes the irreversible cleavage of the glycosidic bond in both 5'-methylthioadenosine (MTA) and S-adenosylhomocysteine (SAH/AdoHcy) to adenine and the corresponding thioribose, 5'-methylthioribose and S-ribosylhomocysteine, respectively. Also cleaves 5'-deoxyadenosine, a toxic by-product of radical S-adenosylmethionine (SAM) enzymes, into 5-deoxyribose and adenine. The protein is 5'-methylthioadenosine/S-adenosylhomocysteine nucleosidase of Histophilus somni (strain 129Pt) (Haemophilus somnus).